A 272-amino-acid polypeptide reads, in one-letter code: Sugar-phosphatase AraL (272 aa).

Belongs to the HAD-like hydrolase superfamily. Mg(2+) serves as cofactor.

It carries out the reaction sugar phosphate + H2O = sugar + phosphate.. The enzyme catalyses O-phospho-L-serine + H2O = L-serine + phosphate. It catalyses the reaction O-phospho-D-serine + H2O = D-serine + phosphate. Catalyzes the dephosphorylation of C5 and C6 carbon sugars in vitro. Catalyzes the dephosphorylation of 3'-AMP and phosphoserine in vitro. In Bacillus subtilis (strain 168), this protein is Sugar-phosphatase AraL (araL).